Reading from the N-terminus, the 573-residue chain is Potassium-transporting ATPase potassium-binding subunit (573 aa).

10 helical membrane passes run 6–26 (ILFA…GSYI), 66–86 (FFSL…ILLL), 135–155 (ALAV…IALI), 177–197 (VFWI…FQGV), 257–277 (IQMV…GKWV), 283–303 (GWLI…VMTI), 382–402 (IFGG…LAVF), 428–448 (MFAL…AAVI), 493–513 (ITIA…VIML), and 537–557 (FIFA…TIFP).

It belongs to the KdpA family. The system is composed of three essential subunits: KdpA, KdpB and KdpC.

It is found in the cell inner membrane. Functionally, part of the high-affinity ATP-driven potassium transport (or Kdp) system, which catalyzes the hydrolysis of ATP coupled with the electrogenic transport of potassium into the cytoplasm. This subunit binds the periplasmic potassium ions and delivers the ions to the membrane domain of KdpB through an intramembrane tunnel. This is Potassium-transporting ATPase potassium-binding subunit from Francisella tularensis subsp. tularensis (strain WY96-3418).